Reading from the N-terminus, the 131-residue chain is Large ribosomal subunit protein bL20 (131 aa).

Belongs to the bacterial ribosomal protein bL20 family.

Functionally, binds directly to 23S ribosomal RNA and is necessary for the in vitro assembly process of the 50S ribosomal subunit. It is not involved in the protein synthesizing functions of that subunit. The chain is Large ribosomal subunit protein bL20 from Mycolicibacterium paratuberculosis (strain ATCC BAA-968 / K-10) (Mycobacterium paratuberculosis).